A 335-amino-acid chain; its full sequence is Ketol-acid reductoisomerase (NADP(+)) 2 (335 aa).

One can recognise a KARI N-terminal Rossmann domain in the interval 1 to 180; that stretch reads MKTYYEQDAN…GCTRAGVIET (180 aa). NADP(+)-binding positions include 24 to 27, Arg47, Ser51, and 81 to 84; these read YGSQ and DEQQ. The active site involves His106. Gly132 contacts NADP(+). A KARI C-terminal knotted domain is found at 181–326; that stretch reads TFQEETETDL…EELREMMSWI (146 aa). Residues Asp189, Glu193, Glu225, and Glu229 each coordinate Mg(2+). Ser250 provides a ligand contact to substrate.

Belongs to the ketol-acid reductoisomerase family. Mg(2+) serves as cofactor.

The catalysed reaction is (2R)-2,3-dihydroxy-3-methylbutanoate + NADP(+) = (2S)-2-acetolactate + NADPH + H(+). It carries out the reaction (2R,3R)-2,3-dihydroxy-3-methylpentanoate + NADP(+) = (S)-2-ethyl-2-hydroxy-3-oxobutanoate + NADPH + H(+). The protein operates within amino-acid biosynthesis; L-isoleucine biosynthesis; L-isoleucine from 2-oxobutanoate: step 2/4. It functions in the pathway amino-acid biosynthesis; L-valine biosynthesis; L-valine from pyruvate: step 2/4. Its function is as follows. Involved in the biosynthesis of branched-chain amino acids (BCAA). Catalyzes an alkyl-migration followed by a ketol-acid reduction of (S)-2-acetolactate (S2AL) to yield (R)-2,3-dihydroxy-isovalerate. In the isomerase reaction, S2AL is rearranged via a Mg-dependent methyl migration to produce 3-hydroxy-3-methyl-2-ketobutyrate (HMKB). In the reductase reaction, this 2-ketoacid undergoes a metal-dependent reduction by NADPH to yield (R)-2,3-dihydroxy-isovalerate. The protein is Ketol-acid reductoisomerase (NADP(+)) 2 of Bacillus thuringiensis subsp. konkukian (strain 97-27).